Consider the following 487-residue polypeptide: Serine/threonine-protein kinase 4 (487 aa).

M1 bears the N-acetylmethionine mark. Residue T3 is modified to Phosphothreonine. The Protein kinase domain occupies 30-281 (FDVLEKLGEG…ATQLLQHPFV (252 aa)). ATP contacts are provided by residues 36–44 (LGEGSYGSV) and K59. Catalysis depends on D149, which acts as the Proton acceptor. T183 is subject to Phosphothreonine; by autocatalysis. At S265 the chain carries Phosphoserine. A coiled-coil region spans residues 290–310 (LRDLINEAMDVKLKRQESQQR). Residues 303-312 (KRQESQQREV) show a composition bias toward basic and acidic residues. The interval 303 to 332 (KRQESQQREVDQDDEENSEEDEMDSGTMVR) is disordered. A compositionally biased stretch (acidic residues) spans 313–326 (DQDDEENSEEDEMD). S320 is modified (phosphoserine). Phosphothreonine occurs at positions 340 and 367. Position 387 is a phosphothreonine; by PKB/AKT1 (T387). A phosphoserine mark is found at S410 and S414. Y433 carries the post-translational modification Phosphotyrosine. In terms of domain architecture, SARAH spans 433–480 (YEFLKSWTVEDLQKRLLALDPMMEQEIEEIRQKYQSKRQPILDAIEAK).

Belongs to the protein kinase superfamily. STE Ser/Thr protein kinase family. STE20 subfamily. As to quaternary structure, homodimer; mediated via the coiled-coil region. Interacts with NORE1, which inhibits autoactivation. Interacts with and stabilizes SAV1. Interacts with RASSF1. Interacts with FOXO3. Interacts with RASSF2 (via SARAH domain). Interacts with AR, PKB/AKT1, TNNI3 and SIRT1. Interacts with DLG5 (via PDZ domain 3). Interacts with MARK3 and SCRIB in the presence of DLG5. Mg(2+) is required as a cofactor. Autophosphorylated on serine and threonine residues. Phosphorylation at Thr-387 by PKB/AKT1, leads to inhibition of its: kinase activity, nuclear translocation and autophosphorylation at Thr-183. It also diminishes its cleavage by caspases and its ability to phosphorylate FOXO3. Post-translationally, proteolytically cleaved by caspase-3 during apoptosis at Asp-326 and Asp-349 resulting in a 37 kDa or a 39 kDa subunit respectively. The 39 kDa subunit is further cleaved into the 37 kDa form. Proteolytic cleavage results in kinase activation and nuclear translocation of the truncated form (MST1/N). It is less likely that cleavage at Asp-349 is a prerequisite for activation as this site is not conserved in the murine ortholog.

Its subcellular location is the cytoplasm. It localises to the nucleus. It carries out the reaction L-seryl-[protein] + ATP = O-phospho-L-seryl-[protein] + ADP + H(+). It catalyses the reaction L-threonyl-[protein] + ATP = O-phospho-L-threonyl-[protein] + ADP + H(+). Its activity is regulated as follows. Inhibited by the C-terminal non-catalytic region. Activated by caspase-cleavage. Full activation also requires homodimerization and autophosphorylation of Thr-183. Activated by RASSF1 which acts by preventing its dephosphorylation. Its function is as follows. Stress-activated, pro-apoptotic kinase which, following caspase-cleavage, enters the nucleus and induces chromatin condensation followed by internucleosomal DNA fragmentation. Key component of the Hippo signaling pathway which plays a pivotal role in organ size control and tumor suppression by restricting proliferation and promoting apoptosis. The core of this pathway is composed of a kinase cascade wherein STK3/MST2 and STK4/MST1, in complex with its regulatory protein SAV1, phosphorylates and activates LATS1/2 in complex with its regulatory protein MOB1, which in turn phosphorylates and inactivates YAP1 oncoprotein and WWTR1/TAZ. Phosphorylation of YAP1 by LATS2 inhibits its translocation into the nucleus to regulate cellular genes important for cell proliferation, cell death, and cell migration. STK3/MST2 and STK4/MST1 are required to repress proliferation of mature hepatocytes, to prevent activation of facultative adult liver stem cells (oval cells), and to inhibit tumor formation. Phosphorylates 'Ser-14' of histone H2B (H2BS14ph) during apoptosis. Phosphorylates FOXO3 upon oxidative stress, which results in its nuclear translocation and cell death initiation. Phosphorylates MOBKL1A, MOBKL1B and RASSF2. Phosphorylates TNNI3 (cardiac Tn-I) and alters its binding affinity to TNNC1 (cardiac Tn-C) and TNNT2 (cardiac Tn-T). Phosphorylates FOXO1 on 'Ser-212' and regulates its activation and stimulates transcription of PMAIP1 in a FOXO1-dependent manner. Phosphorylates SIRT1 and inhibits SIRT1-mediated p53/TP53 deacetylation, thereby promoting p53/TP53 dependent transcription and apoptosis upon DNA damage. Acts as an inhibitor of PKB/AKT1. Phosphorylates AR on 'Ser-650' and suppresses its activity by intersecting with PKB/AKT1 signaling and antagonizing formation of AR-chromatin complexes. The protein is Serine/threonine-protein kinase 4 (STK4) of Macaca mulatta (Rhesus macaque).